The chain runs to 493 residues: ATP synthase subunit beta, chloroplastic (493 aa).

An ATP-binding site is contributed by 170–177 (GGAGVGKT).

The protein belongs to the ATPase alpha/beta chains family. As to quaternary structure, F-type ATPases have 2 components, CF(1) - the catalytic core - and CF(0) - the membrane proton channel. CF(1) has five subunits: alpha(3), beta(3), gamma(1), delta(1), epsilon(1). CF(0) has four main subunits: a(1), b(1), b'(1) and c(9-12).

The protein resides in the plastid. It is found in the chloroplast thylakoid membrane. The catalysed reaction is ATP + H2O + 4 H(+)(in) = ADP + phosphate + 5 H(+)(out). Produces ATP from ADP in the presence of a proton gradient across the membrane. The catalytic sites are hosted primarily by the beta subunits. The protein is ATP synthase subunit beta, chloroplastic of Adiantum capillus-veneris (Maidenhair fern).